The sequence spans 373 residues: Probable G-protein coupled receptor 45 (373 aa).

Residues Met1–Ala38 are Extracellular-facing. Asn17 carries N-linked (GlcNAc...) asparagine glycosylation. A helical membrane pass occupies residues Ile39–Val59. Residues Tyr60–Thr75 are Cytoplasmic-facing. Residues Leu76 to Ile96 form a helical membrane-spanning segment. At Thr97 to Leu109 the chain is on the extracellular side. The helical transmembrane segment at Ser110–Val130 threads the bilayer. At Asp131–Lys149 the chain is on the cytoplasmic side. A helical membrane pass occupies residues Met150 to Trp170. Residues Thr171–Thr198 are Extracellular-facing. Residues Leu199 to Leu219 traverse the membrane as a helical segment. Over Asn220–Thr269 the chain is Cytoplasmic. A helical transmembrane segment spans residues Ile270–Leu290. Residues Ser291 to Thr306 are Extracellular-facing. Residues Ser307–Trp327 traverse the membrane as a helical segment. The Cytoplasmic segment spans residues Arg328 to Val373.

This sequence belongs to the G-protein coupled receptor 1 family. In terms of tissue distribution, brain specific.

It is found in the cell membrane. Orphan receptor. May play a role in brain function. This is Probable G-protein coupled receptor 45 (Gpr45) from Mus musculus (Mouse).